We begin with the raw amino-acid sequence, 338 residues long: 5-dehydro-2-deoxygluconokinase (338 aa).

It belongs to the carbohydrate kinase PfkB family.

The catalysed reaction is 5-dehydro-2-deoxy-D-gluconate + ATP = 6-phospho-5-dehydro-2-deoxy-D-gluconate + ADP + H(+). The protein operates within polyol metabolism; myo-inositol degradation into acetyl-CoA; acetyl-CoA from myo-inositol: step 5/7. Functionally, catalyzes the phosphorylation of 5-dehydro-2-deoxy-D-gluconate (2-deoxy-5-keto-D-gluconate or DKG) to 6-phospho-5-dehydro-2-deoxy-D-gluconate (DKGP). In Mesomycoplasma hyopneumoniae (strain 7448) (Mycoplasma hyopneumoniae), this protein is 5-dehydro-2-deoxygluconokinase.